Consider the following 293-residue polypeptide: Exosome complex component RRP4 (293 aa).

The 81-residue stretch at 79–159 folds into the S1 motif domain; the sequence is EVGDIVVGRI…SDGAVSLHTR (81 aa). Serine 124 bears the Phosphoserine mark.

This sequence belongs to the RRP4 family. As to quaternary structure, component of the RNA exosome core complex (Exo-9), composed of EXOSC1, EXOSC2, EXOSC3, EXOSC4, EXOSC5, EXOSC6, EXOSC7, EXOSC8 and EXOSC9; within the complex interacts with EXOSC4 and EXOSC7. The catalytically inactive RNA exosome core complex (Exo-9) associates with the catalytic subunit EXOSC10/RRP6. Exo-9 may associate with DIS3 to form the nucleolar exosome complex, or DIS3L to form the cytoplasmic exosome complex. Exo-9 is formed by a hexameric base ring consisting of the heterodimers EXOSC4-EXOSC9, EXOSC5-EXOSC8 and EXOSC6-EXOSC7, and a cap ring consisting of EXOSC1, EXOSC2 and EXOSC3. The RNA exosome complex associates with cofactors C1D/RRP47, MPHOSPH6/MPP6 and MTREX/MTR4. Interacts with GTPBP1. Interacts with ZFP36L1 (via N-terminus).

The protein localises to the cytoplasm. It is found in the nucleus. The protein resides in the nucleolus. In terms of biological role, non-catalytic component of the RNA exosome complex which has 3'-&gt;5' exoribonuclease activity and participates in a multitude of cellular RNA processing and degradation events. In the nucleus, the RNA exosome complex is involved in proper maturation of stable RNA species such as rRNA, snRNA and snoRNA, in the elimination of RNA processing by-products and non-coding 'pervasive' transcripts, such as antisense RNA species and promoter-upstream transcripts (PROMPTs), and of mRNAs with processing defects, thereby limiting or excluding their export to the cytoplasm. The RNA exosome may be involved in Ig class switch recombination (CSR) and/or Ig variable region somatic hypermutation (SHM) by targeting AICDA deamination activity to transcribed dsDNA substrates. In the cytoplasm, the RNA exosome complex is involved in general mRNA turnover and specifically degrades inherently unstable mRNAs containing AU-rich elements (AREs) within their 3' untranslated regions, and in RNA surveillance pathways, preventing translation of aberrant mRNAs. It seems to be involved in degradation of histone mRNA. The catalytic inactive RNA exosome core complex of 9 subunits (Exo-9) is proposed to play a pivotal role in the binding and presentation of RNA for ribonucleolysis, and to serve as a scaffold for the association with catalytic subunits and accessory proteins or complexes. EXOSC2 as peripheral part of the Exo-9 complex stabilizes the hexameric ring of RNase PH-domain subunits through contacts with EXOSC4 and EXOSC7. The polypeptide is Exosome complex component RRP4 (Homo sapiens (Human)).